A 24-amino-acid chain; its full sequence is Superoxide dismutase [Cu-Zn], chloroplastic (24 aa).

It belongs to the Cu-Zn superoxide dismutase family. As to quaternary structure, homodimer. Requires Cu cation as cofactor. It depends on Zn(2+) as a cofactor.

Its subcellular location is the plastid. It is found in the chloroplast. It carries out the reaction 2 superoxide + 2 H(+) = H2O2 + O2. In terms of biological role, destroys radicals which are normally produced within the cells and which are toxic to biological systems. The polypeptide is Superoxide dismutase [Cu-Zn], chloroplastic (Picea abies (Norway spruce)).